The following is a 76-amino-acid chain: AFAGVLADADIKAALAGCAAADSFNYKTFFKSPEEVKKFFAIIDQDHSGFIEEEELKLFLQTFSAGARALSDAETK.

Ala-1 carries the post-translational modification N-acetylalanine. Residues 31-66 (KSPEEVKKFFAIIDQDHSGFIEEEELKLFLQTFSAG) form the EF-hand domain. Positions 44, 46, 48, 50, 52, and 55 each coordinate Ca(2+).

It belongs to the parvalbumin family.

Its function is as follows. In muscle, parvalbumin is thought to be involved in relaxation after contraction. It binds two calcium ions. This Merluccius polylepis (Southern hake) protein is Parvalbumin beta 3.